The following is a 622-amino-acid chain: Palmitoyl-protein thioesterase-dolichyl pyrophosphate phosphatase fusion 1 (622 aa).

A signal peptide spans 1 to 24 (MLSCSSFLIFFLFSWVLLPMKSFA). Residues 25 to 405 (IPIISLDKVR…NVSEEKGPKS (381 aa)) are Lumenal-facing. Cysteine 106 and cysteine 138 are joined by a disulfide. Serine 125 is a catalytic residue. N-linked (GlcNAc...) asparagine glycosylation is present at asparagine 223. The active site involves aspartate 245. Asparagine 260 is a glycosylation site (N-linked (GlcNAc...) asparagine). Histidine 298 is a catalytic residue. N-linked (GlcNAc...) asparagine glycosylation occurs at asparagine 396. The chain crosses the membrane as a helical span at residues 406–426 (FANLAFITIFSHFFYHIDDMW). Residues 427 to 428 (RS) are Cytoplasmic-facing. A helical transmembrane segment spans residues 429–449 (TLGLFSLIPQIIGIIYLTVMF). At 450–488 (TGRELDTFMQFGGQVVNEFINYVVKVSLKYPRPADIEYG) the chain is on the lumenal side. A helical membrane pass occupies residues 489–511 (VGYGMPSSHSQFMGFFSAYMIAW). Residues 512–519 (DYKYRRSQ) lie on the Cytoplasmic side of the membrane. Residues 520 to 540 (CFSMLSFAKYAIYLTLSTFVC) traverse the membrane as a helical segment. Residues 541 to 552 (SSRYLLDFHYLT) are Lumenal-facing. The helical transmembrane segment at 553–573 (QVVYGYMIGFGVGLFWVYLVG) threads the bilayer. Residues 574–622 (KLRSLGVTKWLLSLPPLQFFYIKDTIPHSKDNHKRQWLESKQFKNQKSN) are Cytoplasmic-facing.

This sequence in the N-terminal section; belongs to the palmitoyl-protein thioesterase family. In the C-terminal section; belongs to the dolichyldiphosphatase family. In terms of processing, proteolytically cleaved, possibly by krp1.

It localises to the vacuole. The protein resides in the endoplasmic reticulum membrane. It carries out the reaction S-hexadecanoyl-L-cysteinyl-[protein] + H2O = L-cysteinyl-[protein] + hexadecanoate + H(+). The catalysed reaction is a di-trans,poly-cis-dolichyl diphosphate + H2O = a di-trans,poly-cis-dolichyl phosphate + phosphate + H(+). Its function is as follows. Essential protein. Removes thioester-linked fatty acyl groups such as palmitate from modified cysteine residues in proteins or peptides during vacuolar degradation. Required for efficient N-glycosylation. Necessary for maintaining optimal levels of dolichol-linked oligosaccharides. This chain is Palmitoyl-protein thioesterase-dolichyl pyrophosphate phosphatase fusion 1 (pdf1), found in Schizosaccharomyces pombe (strain 972 / ATCC 24843) (Fission yeast).